We begin with the raw amino-acid sequence, 680 residues long: DNA ligase (680 aa).

NAD(+)-binding positions include 35–39, 84–85, and Glu115; these read DAQYD and SL. Lys117 (N6-AMP-lysine intermediate) is an active-site residue. Positions 138, 174, 291, and 315 each coordinate NAD(+). Residues Cys419, Cys422, Cys437, and Cys442 each coordinate Zn(2+). The 80-residue stretch at 601–680 folds into the BRCT domain; the sequence is NKNMPFSGME…REFINMLEQS (80 aa).

This sequence belongs to the NAD-dependent DNA ligase family. LigA subfamily. Requires Mg(2+) as cofactor. Mn(2+) is required as a cofactor.

The enzyme catalyses NAD(+) + (deoxyribonucleotide)n-3'-hydroxyl + 5'-phospho-(deoxyribonucleotide)m = (deoxyribonucleotide)n+m + AMP + beta-nicotinamide D-nucleotide.. In terms of biological role, DNA ligase that catalyzes the formation of phosphodiester linkages between 5'-phosphoryl and 3'-hydroxyl groups in double-stranded DNA using NAD as a coenzyme and as the energy source for the reaction. It is essential for DNA replication and repair of damaged DNA. The sequence is that of DNA ligase from Dehalococcoides mccartyi (strain ATCC BAA-2100 / JCM 16839 / KCTC 5957 / BAV1).